Reading from the N-terminus, the 312-residue chain is Malate dehydrogenase (312 aa).

NAD(+) is bound by residues 12–17 and D36; that span reads GAGFTG. Residues R87 and R93 each contribute to the substrate site. NAD(+) is bound by residues N100 and 123–125; that span reads LTN. Residue N125 participates in substrate binding. Position 149 is a phosphoserine (S149). Residue R156 coordinates substrate. Catalysis depends on H180, which acts as the Proton acceptor.

Belongs to the LDH/MDH superfamily. MDH type 3 family.

The catalysed reaction is (S)-malate + NAD(+) = oxaloacetate + NADH + H(+). Its function is as follows. Catalyzes the reversible oxidation of malate to oxaloacetate. The protein is Malate dehydrogenase of Bacillus cytotoxicus (strain DSM 22905 / CIP 110041 / 391-98 / NVH 391-98).